The primary structure comprises 359 residues: Aspartate carbamoyltransferase catalytic subunit (359 aa).

Carbamoyl phosphate-binding residues include Arg52 and Thr53. Lys81 is an L-aspartate binding site. Carbamoyl phosphate contacts are provided by Arg102, His130, and Gln133. The L-aspartate site is built by Arg163 and Arg224. Positions 264 and 265 each coordinate carbamoyl phosphate.

This sequence belongs to the aspartate/ornithine carbamoyltransferase superfamily. ATCase family. Heterododecamer (2C3:3R2) of six catalytic PyrB chains organized as two trimers (C3), and six regulatory PyrI chains organized as three dimers (R2).

The enzyme catalyses carbamoyl phosphate + L-aspartate = N-carbamoyl-L-aspartate + phosphate + H(+). The protein operates within pyrimidine metabolism; UMP biosynthesis via de novo pathway; (S)-dihydroorotate from bicarbonate: step 2/3. Catalyzes the condensation of carbamoyl phosphate and aspartate to form carbamoyl aspartate and inorganic phosphate, the committed step in the de novo pyrimidine nucleotide biosynthesis pathway. The polypeptide is Aspartate carbamoyltransferase catalytic subunit (Brachyspira hyodysenteriae (strain ATCC 49526 / WA1)).